The primary structure comprises 410 residues: Lipid droplet-regulating VLDL assembly factor AUP1 (410 aa).

Position 1 is an N-acetylmethionine (Met1). Topologically, residues 1-20 (MEPPPAPGPERLFDSHRLPS) are cytoplasmic. The stretch at 21 to 41 (DGFLLLALLLYAPVGLCLLVL) is an intramembrane region. Residues 42-410 (RLFLGLHVFL…FRERQAQEAE (369 aa)) are Cytoplasmic-facing. Positions 258–295 (RLTPADKAEHMKRQRHPRLRPQSVQSSFPSPPSPSSDV) are disordered. Position 292 is a phosphoserine (Ser292). Residues 296 to 338 (QLTTLAHRVKEVLPHVPLNVIQRDLARTGCVDLTITNLLEGAV) enclose the CUE domain. Residues 344–369 (DVTEGSQSPPAPSAPKFPSSGLATPQ) are disordered. Ser363 is modified (phosphoserine). Thr367 carries the post-translational modification Phosphothreonine.

It belongs to the AUP1 family. Identified in a complex that contains SEL1L, OS9, FAF2/UBXD8, UBE2J1/UBC6E and AUP1. Interacts with the cytoplasmic tail of ITGA2B, ITGA1, ITGA2, ITGA5, ITGAV and ITGAM. Interacts (via C-terminus) with UBE2G2; the interaction recruits UBE2G2 to lipid droplets. Interacts with ubiquitin ligases AMFR/gp78 and RNF139/TRC8; this promotes interaction of UBE2G2 with AMFR and RNF139. Interacts with apolipoprotein APOB. Monoubiquitinated and diubiquitinated. In terms of tissue distribution, ubiquitous.

It is found in the endoplasmic reticulum membrane. Its subcellular location is the lipid droplet. Its function is as follows. Plays a role in the translocation of terminally misfolded proteins from the endoplasmic reticulum lumen to the cytoplasm and their degradation by the proteasome. Plays a role in lipid droplet formation. Induces lipid droplet clustering. Recruits ubiquitin-conjugating enzyme UBE2G2 to lipid droplets which facilitates its interaction with ubiquitin ligases AMFR/gp78 and RNF139/TRC8, leading to sterol-induced ubiquitination of HMGCR and its subsequent proteasomal degradation. Also required for the degradation of INSIG1, SREBF1 and SREBF2. Plays a role in regulating assembly and secretion of very low density lipoprotein particles and stability of apolipoprotein APOB. This Mus musculus (Mouse) protein is Lipid droplet-regulating VLDL assembly factor AUP1.